A 164-amino-acid chain; its full sequence is Nitrogen regulatory protein homolog (164 aa).

The PTS EIIA type-2 domain occupies Glu-5–Thr-152.

Functionally, not known; lacks the phosphorylation site found in other PtsN proteins. The sequence is that of Nitrogen regulatory protein homolog (ptsN) from Haemophilus influenzae (strain ATCC 51907 / DSM 11121 / KW20 / Rd).